The primary structure comprises 776 residues: Protein STRUBBELIG-RECEPTOR FAMILY 3 (776 aa).

The first 29 residues, Met1 to Ala29, serve as a signal peptide directing secretion. Over Ala30–Asp35 the chain is Cytoplasmic. Residues Val36–Ala56 traverse the membrane as a helical segment. Residues Ser57 to Lys316 lie on the Extracellular side of the membrane. Asn72 carries N-linked (GlcNAc...) asparagine glycosylation. LRR repeat units follow at residues Ser99–Val120, Thr121–Leu143, Phe145–Leu167, Gly169–Leu191, Thr193–Pro215, and Leu216–Ser236. Asn179 carries N-linked (GlcNAc...) asparagine glycosylation. N-linked (GlcNAc...) asparagine glycosylation is found at Asn248 and Asn253. Positions Met251 to Ser311 are disordered. Positions Ser254 to Thr268 are enriched in low complexity. Residues Lys269 to Asn284 show a composition bias toward pro residues. A compositionally biased stretch (low complexity) spans Ser298–Lys309. The N-linked (GlcNAc...) asparagine glycan is linked to Asn310. A helical membrane pass occupies residues Ile317 to Leu337. At Leu338–Asp776 the chain is on the cytoplasmic side. The disordered stretch occupies residues Pro355–Pro440. The segment covering Arg381–Arg407 has biased composition (basic and acidic residues). Positions Met426–Pro440 are enriched in pro residues. Residues Phe485–Ile763 form the Protein kinase domain. Residues Ile491 to Val499 and Lys513 contribute to the ATP site.

The protein belongs to the protein kinase superfamily. Ser/Thr protein kinase family. Expressed in seedlings, roots, stems, leaves, flowers and siliques.

Its subcellular location is the membrane. Not essential for epidermal patterning and not redundant with STRUBBELIG. The polypeptide is Protein STRUBBELIG-RECEPTOR FAMILY 3 (SRF3) (Arabidopsis thaliana (Mouse-ear cress)).